A 264-amino-acid polypeptide reads, in one-letter code: MAATAAALAVTDELALPLRAVGDLAAAAGVSREEVVVITQCASLGGKLPFDDASVGSVLAVIKKVENLGDLFITEISRVLKAGGMVLIQSSPSDQDPNNSIQRKLLLGGFVDVQASAASSQDSEHSVTIKAKKVSWSMGSSFPLKKATKGLPKIQIDDDSELIDEDSLLTEDDLKKPELPVVGDCEVGATRKACKNCTCGRAEAEEKVEKLNLTSEQINNPQSACGNCGLGDAFRCGTCPYRGLPAFKPGEKIALPGNFLAADL.

The interval Met-1 to Phe-142 is N-terminal SAM-like domain. A linker region spans residues Pro-143 to Leu-174. 4 residues coordinate [2Fe-2S] cluster: Cys-185, Cys-194, Cys-197, and Cys-199. The tract at residues Cys-185–Cys-199 is fe-S binding site A. Cys-225, Cys-228, Cys-236, and Cys-239 together coordinate [4Fe-4S] cluster. Short sequence motifs (cx2C motif) lie at residues Cys-225–Cys-228 and Cys-236–Cys-239. The interval Cys-225–Cys-239 is fe-S binding site B.

Belongs to the anamorsin family. As to quaternary structure, monomer. [2Fe-2S] cluster serves as cofactor. The cofactor is [4Fe-4S] cluster.

The protein resides in the cytoplasm. It is found in the mitochondrion intermembrane space. Its function is as follows. Component of the cytosolic iron-sulfur (Fe-S) protein assembly (CIA) machinery. Required for the maturation of extramitochondrial Fe-S proteins. Part of an electron transfer chain functioning in an early step of cytosolic Fe-S biogenesis, facilitating the de novo assembly of a [4Fe-4S] cluster on the cytosolic Fe-S scaffold complex. Electrons are transferred from NADPH via a FAD- and FMN-containing diflavin oxidoreductase. Together with the diflavin oxidoreductase, also required for the assembly of the diferric tyrosyl radical cofactor of ribonucleotide reductase (RNR), probably by providing electrons for reduction during radical cofactor maturation in the catalytic small subunit. The protein is Anamorsin homolog 2 of Oryza sativa subsp. indica (Rice).